The sequence spans 414 residues: Enterobactin exporter EntS (414 aa).

Residues Met-1–Ala-21 lie on the Cytoplasmic side of the membrane. The helical transmembrane segment at Val-22–Val-42 threads the bilayer. The Periplasmic portion of the chain corresponds to Gln-43–Gly-55. The chain crosses the membrane as a helical span at residues Leu-56–Ala-76. Residues Asp-77–Lys-83 are Cytoplasmic-facing. The helical transmembrane segment at Val-84–Leu-104 threads the bilayer. The Periplasmic portion of the chain corresponds to Leu-105 to Ser-109. A helical membrane pass occupies residues Leu-110–Ala-130. At Leu-131–Arg-156 the chain is on the cytoplasmic side. Residues Leu-157–Trp-177 form a helical membrane-spanning segment. Residue Asn-178 is a topological domain, periplasmic. The helical transmembrane segment at Tyr-179–Leu-199 threads the bilayer. Over Pro-200 to Arg-218 the chain is Cytoplasmic. A helical transmembrane segment spans residues Phe-219–Ala-239. Over Ser-240–Ser-256 the chain is Periplasmic. A helical membrane pass occupies residues Ala-257–Thr-277. Residues Ser-278 to Pro-287 lie on the Cytoplasmic side of the membrane. The helical transmembrane segment at Gly-288–Ile-307 threads the bilayer. The Periplasmic segment spans residues Met-308 to Ala-313. The helical transmembrane segment at Gly-314 to Leu-336 threads the bilayer. Topologically, residues Gln-337–Asn-356 are cytoplasmic. Residues Val-357–Val-377 form a helical membrane-spanning segment. Residue Ala-378 is a topological domain, periplasmic. The helical transmembrane segment at Ser-379–Gly-399 threads the bilayer. The Cytoplasmic segment spans residues Glu-400–Gly-414.

It belongs to the major facilitator superfamily. EntS (TC 2.A.1.38) family.

The protein localises to the cell inner membrane. Its function is as follows. Component of an export pathway for enterobactin. The polypeptide is Enterobactin exporter EntS (Salmonella paratyphi A (strain ATCC 9150 / SARB42)).